Consider the following 467-residue polypeptide: Serine/threonine-protein phosphatase 2A 56 kDa regulatory subunit epsilon isoform (467 aa).

A disordered region spans residues 1–40 (MSSAPTTPPSVDKVDGFSRKSVRKARQKRSQSSSQFRSQG). Residue serine 2 is modified to N-acetylserine. Position 7 is a phosphothreonine (threonine 7). Residues 20–29 (KSVRKARQKR) are compositionally biased toward basic residues. Phosphoserine occurs at positions 30, 32, and 34. The span at 30–40 (SQSSSQFRSQG) shows a compositional bias: low complexity.

It belongs to the phosphatase 2A regulatory subunit B56 family. Found in a complex with at least ARL2, PPP2CB; PPP2R1A, PPP2R2A, PPP2R5E and TBCD. PP2A consists of a common heterodimeric core enzyme, composed of a 36 kDa catalytic subunit (subunit C) and a 65 kDa constant regulatory subunit (PR65 or subunit A), that associates with a variety of regulatory subunits. Proteins that associate with the core dimer include three families of regulatory subunits B (the R2/B/PR55/B55, R3/B''/PR72/PR130/PR59 and R5/B'/B56 families), the 48 kDa variable regulatory subunit, viral proteins, and cell signaling molecules. Interacts with SGO1. In terms of processing, phosphorylated on serine residues.

The protein localises to the cytoplasm. Its function is as follows. The B regulatory subunit might modulate substrate selectivity and catalytic activity, and might also direct the localization of the catalytic enzyme to a particular subcellular compartment. The chain is Serine/threonine-protein phosphatase 2A 56 kDa regulatory subunit epsilon isoform (PPP2R5E) from Homo sapiens (Human).